We begin with the raw amino-acid sequence, 260 residues long: Type II methyltransferase M.CviBI (260 aa).

Residues tryptophan 7, lysine 11, aspartate 54, and aspartate 177 each contribute to the S-adenosyl-L-methionine site.

The protein belongs to the N(4)/N(6)-methyltransferase family.

The catalysed reaction is a 2'-deoxyadenosine in DNA + S-adenosyl-L-methionine = an N(6)-methyl-2'-deoxyadenosine in DNA + S-adenosyl-L-homocysteine + H(+). Functionally, a alpha subtype methylase, recognizes the double-stranded sequence 5'-GANTC-3', methylates A-2 on both strands, and protects the DNA from cleavage by the CviBI endonuclease. The chain is Type II methyltransferase M.CviBI from Paramecium bursaria Chlorella virus NC1A (PBCV-NC1A).